A 115-amino-acid polypeptide reads, in one-letter code: T-cell receptor gamma chain V region V108B (115 aa).

The N-terminal stretch at 1–18 (MLLLRWPTFCCLWVFGLG) is a signal peptide. The v segment stretch occupies residues 19–115 (QLEQTELSVT…EATYYCAVWI (97 aa)).

In Mus musculus (Mouse), this protein is T-cell receptor gamma chain V region V108B (Tcrg-V1).